The sequence spans 151 residues: Austinoid biosynthesis clusters protein F (151 aa).

The protein belongs to the trt14 isomerase family. In terms of assembly, homodimer.

It functions in the pathway secondary metabolite biosynthesis; terpenoid biosynthesis. In terms of biological role, part of the gene cluster B that mediates the biosynthesis of the fungal meroterpenoid acetoxydehydroaustin. The first step of the pathway is the synthesis of 3,5-dimethylorsellinic acid by the polyketide synthase ausA. 3,5-dimethylorsellinic acid is then prenylated by the polyprenyl transferase ausN. Further epoxidation by the FAD-dependent monooxygenase ausM and cyclization by the probable terpene cyclase ausL lead to the formation of protoaustinoid A. Protoaustinoid A is then oxidized to spiro-lactone preaustinoid A3 by the combined action of the FAD-binding monooxygenases ausB and ausC, and the dioxygenase ausE. Acid-catalyzed keto-rearrangement and ring contraction of the tetraketide portion of preaustinoid A3 by ausJ lead to the formation of preaustinoid A4. The aldo-keto reductase ausK, with the help of ausH, is involved in the next step by transforming preaustinoid A4 into isoaustinone which is in turn hydroxylated by the P450 monooxygenase ausI to form austinolide. The cytochrome P450 monooxygenase ausG then modifies austinolide to austinol. Austinol is further acetylated to austin by the O-acetyltransferase ausP, which spontaneously changes to dehydroaustin. The cytochrome P450 monooxygenase then converts dehydroaustin is into 7-dehydrodehydroaustin. The hydroxylation catalyzed by ausR permits the second O-acetyltransferase ausQ to add an additional acetyl group to the molecule, leading to the formation of acetoxydehydroaustin. Due to genetic rearrangements of the clusters and the subsequent loss of some enzymes, the end product of the Penicillium brasilianum austinoid biosynthesis clusters is acetoxydehydroaustin. In Penicillium brasilianum, this protein is Austinoid biosynthesis clusters protein F.